The sequence spans 2570 residues: Highly reducing polyketide synthase tstA (2570 aa).

The Ketosynthase family 3 (KS3) domain maps to 16–443; it reads AMPIAVVGIG…GANAHVVLEN (428 aa). Catalysis depends on for beta-ketoacyl synthase activity residues Cys191, His326, and His366. Residues 458–478 are disordered; it reads HTRKSATESSGTSTPSNPGPH. Low complexity predominate over residues 464–478; the sequence is TESSGTSTPSNPGPH. The Malonyl-CoA:ACP transacylase (MAT) domain maps to 567–898; that stretch reads FVFTGQGAQW…YSALVRNKNA (332 aa). The tract at residues 965-1103 is N-terminal hotdog fold; it reads TDLLGVLERN…GLVSVVAPQK (139 aa). The 329-residue stretch at 965–1293 folds into the PKS/mFAS DH domain; sequence TDLLGVLERN…CATLAREGAD (329 aa). The Proton acceptor; for dehydratase activity role is filled by His997. The C-terminal hotdog fold stretch occupies residues 1133–1293; the sequence is RRNINVPQFY…CATLAREGAD (161 aa). The Proton donor; for dehydratase activity role is filled by Asp1198. Positions 1343 to 1645 are methyltransferase (CMeT) domain; sequence LERAAYYMLK…IATSINSNNY (303 aa). The 313-residue stretch at 1866-2178 folds into the Enoyl reductase (ER) domain; sequence GLLDSIFWTD…TGGHMGKLVG (313 aa). Residues 2202-2379 form the Ketoreductase (KR) domain; the sequence is ASYVLIGGLG…ATTIDLGAIS (178 aa). Positions 2482–2559 constitute a Carrier domain; the sequence is DASELILGAL…HLATKIAQRS (78 aa). Ser2519 carries the post-translational modification O-(pantetheine 4'-phosphoryl)serine.

Pantetheine 4'-phosphate is required as a cofactor.

It functions in the pathway secondary metabolite biosynthesis. In terms of biological role, highly reducing polyketide synthase; part of the gene cluster that mediates the biosynthesis of the antihypercholesterolemic agents phomoidrides which are dimeric anhydrides. The pathway begins with the highly reducing polyketide synthase tstA that catalyzes the formation of a C12-fatty acyl-ACP, starting from one acetate and 5 malonate units. The hydrolase tstM is involved in the release of the C12-fatty acyl chain from tstA. The alkylcitrate synthase (ACS) tstJ and the alkylcitrate dehydratase (ACDH) tstI then give rise to decarboxylated monomeric anhydrides by coupling the C12-fatty acyl chain with oxalacetic acid. The cyclase tstC is responsible for the dimerization of the monomeric anhydrides which leads to the production of prephomoidride that contains the characteristic bicyclo[4.3.1]deca-1,6-diene system of phomoidrides. Iterative oxidation catalyzed by the alpha-ketoglutarate-dependent dioxygenase tstK produced then phomoidride A. Finally, the methyltransferase tstE converts phomoidride A to phomoidride B via an acetalization reaction. The phosphatidylethanolamine-binding protein tstB and tstN are not essential for dimerization and their functions have still to be determined. This chain is Highly reducing polyketide synthase tstA, found in Talaromyces stipitatus (strain ATCC 10500 / CBS 375.48 / QM 6759 / NRRL 1006) (Penicillium stipitatum).